Here is a 42-residue protein sequence, read N- to C-terminus: Potassium channel gamma toxin gamma-KTx 1.9 (42 aa).

4 disulfides stabilise this stretch: cysteine 5–cysteine 23, cysteine 11–cysteine 34, cysteine 20–cysteine 39, and cysteine 24–cysteine 41.

This sequence belongs to the ergtoxin family. Gamma-KTx 1 subfamily. In terms of tissue distribution, expressed by the venom gland.

Its subcellular location is the secreted. Functionally, blocks human voltage-gated potassium channel Kv11.1/KCNH2/ERG1 (IC(50)=16.9 nM). The polypeptide is Potassium channel gamma toxin gamma-KTx 1.9 (Centruroides tecomanus (Scorpion)).